The sequence spans 87 residues: Large ribosomal subunit protein bL27 (87 aa).

The disordered stretch occupies residues 1-22; sequence MAHKKGQGSVKNGRDSRSKRLG.

It belongs to the bacterial ribosomal protein bL27 family.

The chain is Large ribosomal subunit protein bL27 from Akkermansia muciniphila (strain ATCC BAA-835 / DSM 22959 / JCM 33894 / BCRC 81048 / CCUG 64013 / CIP 107961 / Muc).